The sequence spans 320 residues: Cytochrome f (320 aa).

The signal sequence occupies residues 1 to 35 (MQNRNTFSWVKDQMSRFISVSIMIYVITRTSISNA). Heme-binding residues include Tyr-36, Cys-56, Cys-59, and His-60. The chain crosses the membrane as a helical span at residues 286 to 306 (VQGLLFFFASVILAQIFLVLK).

Belongs to the cytochrome f family. As to quaternary structure, the 4 large subunits of the cytochrome b6-f complex are cytochrome b6, subunit IV (17 kDa polypeptide, petD), cytochrome f and the Rieske protein, while the 4 small subunits are PetG, PetL, PetM and PetN. The complex functions as a dimer. The cofactor is heme.

It localises to the plastid. Its subcellular location is the chloroplast thylakoid membrane. Its function is as follows. Component of the cytochrome b6-f complex, which mediates electron transfer between photosystem II (PSII) and photosystem I (PSI), cyclic electron flow around PSI, and state transitions. This Ceratophyllum demersum (Rigid hornwort) protein is Cytochrome f.